The following is a 310-amino-acid chain: MKITTKVLIIGSGPAGLSAAIYAARASLNPILINGIQPGGQLTITTDVENYPGFAESVQGPWLMEQMRMQAENVGTKIVNDYVEKVDLSQRPFKVSTGSRTEYEAESIIICTGAEARWLGIPTEQEFMGFGVSACATCDGFFFKNQKVVVVGGGNSAVEEALYLTNHASKVTIVHRRDNFRAEKILQERLFKNPKISVIWDHVVEEIVGNNNPKSVTGVKIQNVHTKETSLVNCSGVFVAIGHKPNTALFAEQVTMDNDNYIITTPGSTKTNIEGVFAAGDVQDKIYRQAITAAGTGCMAALEAEKFLNK.

An FAD-binding site is contributed by 34 to 41 (NGIQPGGQ). A disulfide bond links Cys-135 and Cys-138. 281 to 290 (DVQDKIYRQA) provides a ligand contact to FAD.

Belongs to the class-II pyridine nucleotide-disulfide oxidoreductase family. In terms of assembly, homodimer. Requires FAD as cofactor.

The protein localises to the cytoplasm. It catalyses the reaction [thioredoxin]-dithiol + NADP(+) = [thioredoxin]-disulfide + NADPH + H(+). In Rickettsia bellii (strain RML369-C), this protein is Thioredoxin reductase (trxB).